The chain runs to 368 residues: DNA integrity scanning protein DisA (368 aa).

One can recognise a DAC domain in the interval 15–153 (DERLRATLAA…DGRRHVLDEP (139 aa)). Residues glycine 82, leucine 100, and 113–117 (TRHRS) contribute to the ATP site. A disordered region spans residues 101–121 (QPDPSIPTNESGTRHRSAERT). Residues 112 to 121 (GTRHRSAERT) are compositionally biased toward basic and acidic residues.

This sequence belongs to the DisA family. In terms of assembly, homooctamer. It depends on Mg(2+) as a cofactor.

It catalyses the reaction 2 ATP = 3',3'-c-di-AMP + 2 diphosphate. Participates in a DNA-damage check-point. DisA forms globular foci that rapidly scan along the chromosomes searching for lesions. Functionally, also has diadenylate cyclase activity, catalyzing the condensation of 2 ATP molecules into cyclic di-AMP (c-di-AMP). c-di-AMP likely acts as a signaling molecule that may couple DNA integrity with a cellular process. This Acidothermus cellulolyticus (strain ATCC 43068 / DSM 8971 / 11B) protein is DNA integrity scanning protein DisA.